A 757-amino-acid polypeptide reads, in one-letter code: Xaa-Pro dipeptidyl-peptidase (757 aa).

Catalysis depends on charge relay system residues Ser348, Asp468, and His498.

Belongs to the peptidase S15 family. Homodimer.

The protein resides in the cytoplasm. It carries out the reaction Hydrolyzes Xaa-Pro-|- bonds to release unblocked, N-terminal dipeptides from substrates including Ala-Pro-|-p-nitroanilide and (sequentially) Tyr-Pro-|-Phe-Pro-|-Gly-Pro-|-Ile.. In terms of biological role, removes N-terminal dipeptides sequentially from polypeptides having unsubstituted N-termini provided that the penultimate residue is proline. The sequence is that of Xaa-Pro dipeptidyl-peptidase from Streptococcus pneumoniae serotype 19F (strain G54).